Here is a 454-residue protein sequence, read N- to C-terminus: Asparagine--tRNA ligase (454 aa).

It belongs to the class-II aminoacyl-tRNA synthetase family. In terms of assembly, homodimer.

The protein resides in the cytoplasm. The enzyme catalyses tRNA(Asn) + L-asparagine + ATP = L-asparaginyl-tRNA(Asn) + AMP + diphosphate + H(+). The chain is Asparagine--tRNA ligase from Ureaplasma parvum serovar 3 (strain ATCC 27815 / 27 / NCTC 11736).